Here is a 305-residue protein sequence, read N- to C-terminus: Superkiller complex protein 8 (305 aa).

WD repeat units lie at residues 14 to 57 (AHED…LELQ), 62 to 101 (GHQL…QIRA), 104 to 143 (AGPV…KEYS), 146 to 187 (TRGK…HTLE), 188 to 227 (GHAM…LAAT), 230 to 269 (GHGS…CVHT), and 272 to 305 (DHQD…DCPI).

It belongs to the SKI8 family. Component of the PAF1 complex. Component of the SKI complex.

The protein localises to the nucleus. It is found in the cytoplasm. In terms of biological role, component of the PAF1 complex (PAF1C) which has multiple functions during transcription by RNA polymerase II and is implicated in regulation of development and maintenance of embryonic stem cell pluripotency. PAF1C associates with RNA polymerase II through interaction with POLR2A CTD non-phosphorylated and 'Ser-2'- and 'Ser-5'-phosphorylated forms and is involved in transcriptional elongation, acting both independently and synergistically with TCEA1 and in cooperation with the DSIF complex and HTATSF1. Also acts as a component of the SKI complex, a multiprotein complex that assists the RNA-degrading exosome during the mRNA decay and quality-control pathways. The SKI complex catalyzes mRNA extraction from 80S ribosomal complexes in the 3'-5' direction and channels mRNA to the cytosolic exosome for degradation. The sequence is that of Superkiller complex protein 8 (skic8) from Xenopus tropicalis (Western clawed frog).